The sequence spans 325 residues: MKLMNKIIVPVTASALLLGACGSNATESKDNTLISSKAGDVKVADVMKKMGKEQIANTSFSIVLNKVLADKYKDKVDTKDIDKDIKKEEKQYGGKDQFESMLKQQGMSFDDYKEQKKLSAYQKQLLLDKVNVSDKEIKENSKKASHILIKVKSKSSDKEGLSDKKAKEKAEKIQKEVEKNPNKFGEIAKKESMDSSSAKKDGSLGYVIKGQMVDSFEKALFKLKEGEVSKVVKTDYGYHIIKADKETDFNSEKSNIKQKLIEEKVQKKPKLLTDAYKELLKEYKVDYKDRDIKKAIEDSILDPDKIKQQQQQQSQGGSGLTNSGS.

An N-terminal signal peptide occupies residues 1–20 (MKLMNKIIVPVTASALLLGA). A lipid anchor (N-palmitoyl cysteine) is attached at C21. Residue C21 is the site of S-diacylglycerol cysteine attachment. A PpiC domain is found at 139 to 245 (ENSKKASHIL…YGYHIIKADK (107 aa)). Disordered stretches follow at residues 159-202 (EGLS…KKDG) and 303-325 (PDKIKQQQQQQSQGGSGLTNSGS).

Belongs to the PrsA family.

It localises to the cell membrane. It catalyses the reaction [protein]-peptidylproline (omega=180) = [protein]-peptidylproline (omega=0). Plays a major role in protein secretion by helping the post-translocational extracellular folding of several secreted proteins. The chain is Foldase protein PrsA from Staphylococcus epidermidis (strain ATCC 12228 / FDA PCI 1200).